Consider the following 218-residue polypeptide: Ras-related protein R-Ras (218 aa).

A disordered region spans residues 1 to 30; that stretch reads MSSGAASGTGRGRPRGGGPGPRDPPPGETH. Positions 7 to 20 are enriched in gly residues; the sequence is SGTGRGRPRGGGPG. 36 to 44 is a binding site for GTP; it reads GGGGVGKSA. The Effector region signature appears at 58 to 66; it reads YDPTIEDSY. Residues 83 to 87, 142 to 145, and 172 to 174 each bind GTP; these read DTAGQ, NKAD, and SAK. Cysteine methyl ester is present on cysteine 215. The S-geranylgeranyl cysteine moiety is linked to residue cysteine 215. Residues 216–218 constitute a propeptide, removed in mature form; sequence VLL.

Belongs to the small GTPase superfamily. Ras family. In terms of assembly, interacts with PLCE1. Interacts (active GTP-bound form preferentially) with RGS14. Interacts with OSBPL3. Interacts with ZDHHC19. S-palmitoylated by ZDHHC19, leading to increased association with membranes and with rafts/caveolae as well as enhanced cell viability.

Its subcellular location is the cell membrane. The catalysed reaction is GTP + H2O = GDP + phosphate + H(+). In terms of biological role, GTP-binding protein with GTPase activity, likely involved in the regulation of MAPK signaling pathway and thereby controlling multiple cellular processes. Regulates the organization of the actin cytoskeleton. With OSPBL3, modulates integrin beta-1 (ITGB1) activity. In Rattus norvegicus (Rat), this protein is Ras-related protein R-Ras (Rras).